The following is a 479-amino-acid chain: MSFLPVIMAGGTGSRLWPLSREYHPKQFLSVEGKLSMLQNTIKRLASLSTEEPVVICNDRHRFLVAEQLREIDKLANNIILEPVGRNTAPAIALAAFCALQNADNADPLLLVLAADHVIQDEIAFTKAVRHAEEYAANGKLVTFGIVPTHAETGYGYIRRGELIGNDAYAVAEFVEKPDIDTAGDYFKSGKYYWNSGMFLFRASSYLNELKYLSPEIYKACEKAVGHINPDLDFIRIDKEEFMSCPSDSIDYAVMEHTQHAVVIPMSAGWSDVGSWSSLWDISNKDHQRNVLKGDIFAHACNDNYIYSEDMFISAIGVSNLVIVQTTDALLVANKDTVQDVKKIVDYLKRNDRNEYKQHQEVFRPWGKYNVIDSGKNYLVRCITVKPGEKFVAQMHHHRAEHWIVLSGTARVTKGEQTYMVSENESTFIPPNTIHALENPGMTPLKLIEIQSGTYLGEDDIIRLEQRSGFSKEWTNERS.

Belongs to the mannose-6-phosphate isomerase type 2 family. In terms of assembly, homodimer.

The enzyme catalyses alpha-D-mannose 1-phosphate + GTP + H(+) = GDP-alpha-D-mannose + diphosphate. It participates in nucleotide-sugar biosynthesis; GDP-alpha-D-mannose biosynthesis; GDP-alpha-D-mannose from alpha-D-mannose 1-phosphate (GTP route): step 1/1. The protein operates within bacterial outer membrane biogenesis; LPS O-antigen biosynthesis. Its function is as follows. Involved in GDP-mannose biosynthesis which serves as the activated sugar nucleotide precursor for mannose residues in cell surface polysaccharides. This enzyme participates in synthesis of the LPS group B O antigen. The protein is Mannose-1-phosphate guanylyltransferase RfbM (rfbM) of Salmonella typhimurium (strain LT2 / SGSC1412 / ATCC 700720).